A 521-amino-acid polypeptide reads, in one-letter code: Cytochrome P450 1A1 (521 aa).

Phe-229 serves as a coordination point for substrate. Residue Cys-463 participates in heme binding.

This sequence belongs to the cytochrome P450 family. The cofactor is heme.

Its subcellular location is the endoplasmic reticulum membrane. The protein resides in the microsome membrane. It catalyses the reaction an organic molecule + reduced [NADPH--hemoprotein reductase] + O2 = an alcohol + oxidized [NADPH--hemoprotein reductase] + H2O + H(+). Its function is as follows. Cytochromes P450 are a group of heme-thiolate monooxygenases. They oxidize a variety of structurally unrelated compounds, including steroids, fatty acids, and xenobiotics. The chain is Cytochrome P450 1A1 (cyp1a1) from Opsanus tau (Oyster toadfish).